A 551-amino-acid polypeptide reads, in one-letter code: Cation/acetate symporter ActP (551 aa).

The next 13 membrane-spanning stretches (helical) occupy residues 34-54, 77-97, 104-124, 150-170, 184-204, 207-227, 263-283, 304-324, 356-376, 406-426, 430-450, 469-489, and 498-518; these read IEAI…TYWA, GLAI…SALV, GLIY…LIAE, LSAC…MVGA, VAVV…GMLA, WVQI…ALMV, ISAL…PHIL, GFIG…ILLV, FFLG…VAGL, VSKI…ILFE, IAFM…PIIF, LGLL…VTIL, and YEYP…FFSI.

This sequence belongs to the sodium:solute symporter (SSF) (TC 2.A.21) family.

The protein resides in the cell inner membrane. In terms of biological role, transports acetate. This is Cation/acetate symporter ActP from Yersinia enterocolitica serotype O:8 / biotype 1B (strain NCTC 13174 / 8081).